A 110-amino-acid chain; its full sequence is Insulin (110 aa).

The N-terminal stretch at 1-23 (MALWLQAFTLLVLLVLSSPGAQS) is a signal peptide. Cystine bridges form between Cys-30-Cys-96, Cys-42-Cys-109, and Cys-95-Cys-100. A propeptide spans 56-87 (DVDPLLGFLSPKSAQENEADEYPYKDQGDLKV) (c peptide).

It belongs to the insulin family. In terms of assembly, heterodimer of a B chain and an A chain linked by two disulfide bonds.

Its subcellular location is the secreted. Functionally, insulin decreases blood glucose concentration. It increases cell permeability to monosaccharides, amino acids and fatty acids. It accelerates glycolysis, the pentose phosphate cycle, and glycogen synthesis in liver. This chain is Insulin (ins), found in Pantodon buchholzi (Freshwater butterflyfish).